A 273-amino-acid polypeptide reads, in one-letter code: MSNHLPGVFIVSDSIGETAEMVVRAAASQFNSGNMEIRQVPNISDTETLEEIINQAAASNFIIAYTLVINELADFLKMEARKKGVICVDVLGPVIEAFKSVSDIEPRREPGLLRKVDEMYYRRVEAVEFAVRYDDGKDPRGVMQSDIVLVGVSRTSKTPLSMYLAHKRIKVANVPLVPEVEPPEEIFQVEKGKVIGLVINPEQLNQIRTERLKTLGLKGQASYANLERILEEMEYAQEIMKRLGCPVIDVTNRAVEETASKILEIYYRRLSHV.

151–158 contacts ADP; that stretch reads GVSRTSKT.

It belongs to the pyruvate, phosphate/water dikinase regulatory protein family. PDRP subfamily.

The enzyme catalyses N(tele)-phospho-L-histidyl/L-threonyl-[pyruvate, phosphate dikinase] + ADP = N(tele)-phospho-L-histidyl/O-phospho-L-threonyl-[pyruvate, phosphate dikinase] + AMP + H(+). It catalyses the reaction N(tele)-phospho-L-histidyl/O-phospho-L-threonyl-[pyruvate, phosphate dikinase] + phosphate + H(+) = N(tele)-phospho-L-histidyl/L-threonyl-[pyruvate, phosphate dikinase] + diphosphate. Bifunctional serine/threonine kinase and phosphorylase involved in the regulation of the pyruvate, phosphate dikinase (PPDK) by catalyzing its phosphorylation/dephosphorylation. This is Putative pyruvate, phosphate dikinase regulatory protein 2 from Syntrophomonas wolfei subsp. wolfei (strain DSM 2245B / Goettingen).